The chain runs to 92 residues: MALRHKSAQKRHRQSLKRRAINRAKKSTIKTFSKKALVAAQGGAEDATAMQQRAESLIDKAAKGSTLHKNAAARKKSRLAKAINKAKAAQQA.

2 disordered regions span residues Met1–Lys25 and His68–Ala92. Over residues Ala80–Ala92 the composition is skewed to low complexity.

It belongs to the bacterial ribosomal protein bS20 family.

Functionally, binds directly to 16S ribosomal RNA. This chain is Small ribosomal subunit protein bS20, found in Deinococcus radiodurans (strain ATCC 13939 / DSM 20539 / JCM 16871 / CCUG 27074 / LMG 4051 / NBRC 15346 / NCIMB 9279 / VKM B-1422 / R1).